A 189-amino-acid chain; its full sequence is UPF0301 protein PputW619_0469 (189 aa).

The protein belongs to the UPF0301 (AlgH) family.

The polypeptide is UPF0301 protein PputW619_0469 (Pseudomonas putida (strain W619)).